Here is a 275-residue protein sequence, read N- to C-terminus: Nitrogenase iron protein 3 (275 aa).

9-16 is an ATP binding site; sequence GKGGIGKS. Cys97 serves as a coordination point for [4Fe-4S] cluster. Arg100 carries the ADP-ribosylarginine; by dinitrogenase reductase ADP-ribosyltransferase modification. Cys132 is a binding site for [4Fe-4S] cluster.

The protein belongs to the NifH/BchL/ChlL family. In terms of assembly, homodimer. The cofactor is [4Fe-4S] cluster. The reversible ADP-ribosylation of Arg-100 inactivates the nitrogenase reductase and regulates nitrogenase activity.

It carries out the reaction N2 + 8 reduced [2Fe-2S]-[ferredoxin] + 16 ATP + 16 H2O = H2 + 8 oxidized [2Fe-2S]-[ferredoxin] + 2 NH4(+) + 16 ADP + 16 phosphate + 6 H(+). In terms of biological role, the key enzymatic reactions in nitrogen fixation are catalyzed by the nitrogenase complex, which has 2 components: the iron protein and the molybdenum-iron protein. The sequence is that of Nitrogenase iron protein 3 (nifH3) from Clostridium pasteurianum.